Here is a 236-residue protein sequence, read N- to C-terminus: Purine nucleoside phosphorylase DeoD-type (236 aa).

His-4 contacts a purine D-ribonucleoside. Residues Gly-20, Arg-24, Arg-43, and 87 to 90 each bind phosphate; that span reads RVGS. A purine D-ribonucleoside is bound by residues 179-181 and 203-204; these read EME and SD. The active-site Proton donor is the Asp-204.

It belongs to the PNP/UDP phosphorylase family. Homohexamer; trimer of homodimers.

It carries out the reaction a purine D-ribonucleoside + phosphate = a purine nucleobase + alpha-D-ribose 1-phosphate. It catalyses the reaction a purine 2'-deoxy-D-ribonucleoside + phosphate = a purine nucleobase + 2-deoxy-alpha-D-ribose 1-phosphate. In terms of biological role, catalyzes the reversible phosphorolytic breakdown of the N-glycosidic bond in the beta-(deoxy)ribonucleoside molecules, with the formation of the corresponding free purine bases and pentose-1-phosphate. The polypeptide is Purine nucleoside phosphorylase DeoD-type (Limosilactobacillus reuteri (strain DSM 20016) (Lactobacillus reuteri)).